A 394-amino-acid chain; its full sequence is Cell division protein FtsZ (394 aa).

GTP-binding positions include 21–25 (GGGNN), Arg-29, 108–110 (GTG), Glu-139, Arg-143, Asn-166, and Asp-187. The interval 317–394 (DKPSSQGRKA…EERRSRRTRR (78 aa)) is disordered. 2 stretches are compositionally biased toward low complexity: residues 328 to 346 (STGF…SGAS) and 353 to 364 (SAHTSHSQSSES). The span at 365–388 (VSERSHTTKDDDIPSFIRNREERR) shows a compositional bias: basic and acidic residues.

The protein belongs to the FtsZ family. In terms of assembly, homodimer. Polymerizes to form a dynamic ring structure in a strictly GTP-dependent manner. Interacts directly with several other division proteins.

It is found in the cytoplasm. Functionally, essential cell division protein that forms a contractile ring structure (Z ring) at the future cell division site. The regulation of the ring assembly controls the timing and the location of cell division. One of the functions of the FtsZ ring is to recruit other cell division proteins to the septum to produce a new cell wall between the dividing cells. Binds GTP and shows GTPase activity. The sequence is that of Cell division protein FtsZ from Staphylococcus epidermidis (strain ATCC 35984 / DSM 28319 / BCRC 17069 / CCUG 31568 / BM 3577 / RP62A).